The sequence spans 143 residues: Large ribosomal subunit protein uL15 (143 aa).

The tract at residues 1–57 (MQLNNLKPAAGSKHAKRRVGRGIGSGLGKTAGRGHKGQKSRSGGFHKVGFEGGQMPL) is disordered. Over residues 21–31 (RGIGSGLGKTA) the composition is skewed to gly residues.

Belongs to the universal ribosomal protein uL15 family. As to quaternary structure, part of the 50S ribosomal subunit.

Functionally, binds to the 23S rRNA. This chain is Large ribosomal subunit protein uL15, found in Ralstonia pickettii (strain 12J).